An 810-amino-acid chain; its full sequence is Transitional endoplasmic reticulum ATPase homolog 2 (810 aa).

ATP-binding positions include 252 to 258 (PGTGKTL), N353, H389, and 526 to 531 (GCGKTL). Residues 713–727 (RQEKERQDRSARGEE) are compositionally biased toward basic and acidic residues. Disordered stretches follow at residues 713 to 732 (RQEK…MEDE) and 777 to 810 (FGNN…DLYN). Residues 793 to 802 (PVGGNGGSGG) show a composition bias toward gly residues. Positions 805–810 (DDDLYN) are interaction with ufd-2.

This sequence belongs to the AAA ATPase family. CDC48 subfamily. In terms of assembly, homohexamer; oligomerization is ATP-independent. Forms a ring-shaped particle of 18.3 nm diameter, that displays 6-fold radial symmetry. Interacts with cdc-48.1 and thus may form heterohexamers. Forms a complex composed of ubxn-3, cdc-48.1 and/or cdc-48.2 and substrate cdt-1. Interacts (via N-terminus) with ubxn-3. Interacts (via N-terminus) with atx-3 (via RRDR motif). Interacts (via N-terminus) with ubxn-5. Interacts with ufd-1. Interacts (via DDDLYN motif) with ufd-2. Interacts (via N-terminus) with ubxn-1. Interacts (via N-terminus) with ubxn-2. Interacts (via N-terminus) with ubxn-4. Interacts with ubxn-6. Expressed in body wall muscles.

Its subcellular location is the cytoplasm. The enzyme catalyses ATP + H2O = ADP + phosphate + H(+). The first ATP-binding region has low ATPase activity. The second ATP-binding region is responsible for ATPase activity. ATP binding to the first ATP-binding region induces intrinsic activity of the second ATP-binding region. While ATP binding to the first ATP-binding region appears to prevent ATP hydrolysis by the second ATP-binding region, ADP-binding to first region promotes the coordinate and cooperative ATPase cycle of the second ATP-binding region. ATP binding to the first ATP-binding region induces a conformational change, promoting the rotation of the first ATP-binding region relative to the second ATP-binding region in the hexamer. Inhibited by N-ethylmaleimide (NEM). Its function is as follows. ATP-dependent chaperone which probably uses the energy provided by ATP hydrolysis to generate mechanical force to unfold substrate proteins, disassemble protein complexes, and disaggregate protein aggregates. However, able to prevent aggregation of unfolded proteins also in an ATP-independent manner. Targets polyubiquitinated proteins for proteasomal degradation by binding to 'Lys-48'-linked polyubiquitin chains. Involved in the cytoplasmic elimination of misfolded proteins exported from the ER. This pathway, known as ERAD, prevents the activation of the unfolded protein response (UPR) caused by the accumulation of misfolded proteins in the ER. Together with udf-2 and chn-1, regulates myosin assembly in body wall muscles by targeting myosin chaperone unc-45 for proteasomal degradation. During oocyte meiosis and together with cdc-48.1, required for chromosome condensation at the diakinesis phase in prophase I and for progression of metaphase I. During the first embryonic cell division, regulates DNA replication and thus chromosome segregation and decondensation, and nuclear envelope re-assembly. In S phase and in association with ufd-1, npl-4.1 and/or npl-4.2 and ubxn-3, ensures the degradation of DNA licensing factor cdt-1 after the initiation of DNA replication and thus the disassembly of the DNA replication CMG helicase complex by promoting the dissociation from chromatin of several of its components including cdc-45 and sld-5. Regulates ubxn-3 nuclear localization during S phase. During the first embryonic cell divisions and together with cdc-48.1, regulates the re-assembly of the nuclear envelope after mitosis possibly by inactivating kinase air-2, a component of the chromosomal passenger complex (CPC). In Caenorhabditis elegans, this protein is Transitional endoplasmic reticulum ATPase homolog 2 (cdc-48.2).